The chain runs to 1385 residues: Kinesin-like protein KIF15 (1385 aa).

The interval 1-24 (MAPGCKSELRNVTNSHSNQPSNED) is disordered. Over residues 10–21 (RNVTNSHSNQPS) the composition is skewed to polar residues. The Kinesin motor domain occupies 26–363 (AIKVFVRIRP…LNFAQRAKLI (338 aa)). ATP is bound at residue 109-116 (GQTGSGKT). The stretch at 368–1385 (VVNEDTQGNV…NVFLKERKKE (1018 aa)) forms a coiled coil. Position 1007 is an N6-acetyllysine (Lys-1007). Phosphoserine occurs at positions 1139 and 1167. The interval 1222 to 1243 (DMKRQGESSSQSRPDSQQLKNE) is disordered. Residues 1228–1241 (ESSSQSRPDSQQLK) show a composition bias toward polar residues.

Belongs to the TRAFAC class myosin-kinesin ATPase superfamily. Kinesin family. KLP2 subfamily. Interacts with MKI67 and TPX2. As to expression, expressed in sympathetic neurons.

It localises to the cytoplasm. The protein resides in the cytoskeleton. The protein localises to the spindle. Its function is as follows. Plus-end directed kinesin-like motor enzyme involved in mitotic spindle assembly. The chain is Kinesin-like protein KIF15 (Kif15) from Rattus norvegicus (Rat).